The sequence spans 140 residues: ISDra2 transposase TnpA (140 aa).

Residues His67 and His69 each contribute to the Mg(2+) site. Residues 127 to 133 form a mobile alpha helix region; it reads AQIQKYI. Catalysis depends on Tyr132, which acts as the Nucleophile. Mg(2+) is bound at residue Gln136.

This sequence belongs to the transposase 17 family. As to quaternary structure, homodimer. Requires Mg(2+) as cofactor.

Its activity is regulated as follows. Both the excision and insertion steps are inhibited by TnpB. Its function is as follows. A transposase that is part of insertion sequence (IS) element ISDra2, it is necessary and sufficient for both transposon excision and insertion of ISDra2. This protein alone can be provided in trans and allows transposition of an empty IS element (tnpA or tnpA-tnpB replaced by a selectable marker). ISDra2 binds subterminal imperfect palindromes at the left (LE) and right (RE) ends of the element and cleaves only the 'top strand' which is circularized and subsequently reinserted into the DNA target. This is called a 'peel and paste' mechanism and increases the copy number of the IS. Transposition is linked to DNA replication in the absence of irradiation, with maximal activity when the 'top strand' is on the replication lagging strand, and occurs preferentially on the lagging strand. The IS element inserts 3' of the target sequence 5'-TTGAT-3'; target duplication has not been observed. This chain is ISDra2 transposase TnpA, found in Deinococcus radiodurans (strain ATCC 13939 / DSM 20539 / JCM 16871 / CCUG 27074 / LMG 4051 / NBRC 15346 / NCIMB 9279 / VKM B-1422 / R1).